The chain runs to 216 residues: MRIILLGPPGAGKGTQAKLISEKFSIPHISTGDIFRANIKEKTPLGIEAKRYIDNGQLVPDEVTIGIVKDRLTKDDCDNGFLLDGFPRTVAQAEALDEFLKGINKELDVALLIKVPEEFILERMTGRRVCTSCGASYHIRFNPPKIEGKCDICDNELIQRKDDTEATVKERLEVYSKQTYPLINYYKDNGIISEVNGTESINEVFGNISNILGRDK.

ATP is bound at residue 10-15; sequence GAGKGT. The segment at 30-59 is NMP; sequence STGDIFRANIKEKTPLGIEAKRYIDNGQLV. AMP contacts are provided by residues Thr-31, Arg-36, 57-59, 85-88, and Gln-92; these read QLV and GFPR. The interval 126 to 163 is LID; that stretch reads GRRVCTSCGASYHIRFNPPKIEGKCDICDNELIQRKDD. Position 127 (Arg-127) interacts with ATP. Residues Cys-130 and Cys-133 each contribute to the Zn(2+) site. 136-137 is an ATP binding site; the sequence is SY. Positions 150 and 153 each coordinate Zn(2+). Positions 160 and 171 each coordinate AMP. Glu-199 is an ATP binding site.

It belongs to the adenylate kinase family. In terms of assembly, monomer.

Its subcellular location is the cytoplasm. It catalyses the reaction AMP + ATP = 2 ADP. It functions in the pathway purine metabolism; AMP biosynthesis via salvage pathway; AMP from ADP: step 1/1. Catalyzes the reversible transfer of the terminal phosphate group between ATP and AMP. Plays an important role in cellular energy homeostasis and in adenine nucleotide metabolism. The protein is Adenylate kinase of Clostridium botulinum (strain Langeland / NCTC 10281 / Type F).